We begin with the raw amino-acid sequence, 305 residues long: MAQNHVIKVSKKTLAEMTTVYQPNRLNKTVPYTVFVAKVGTTTITAYQSGKVMFQGPQAEKEAARWEGTSTTPKKKVSPQTTTLPADFGNWSVIGSDEVGNGSYFGPVTVCAAYVDKSMISKLKSLGVRDSKELTDPQIIQLSHVIKELIPYKLLIVEPKKYNEIQPNYNAVHMKVALHNQAIYLLLQELAPTKPEGILIDQFTPENNYRKYVRNEKNQVTEKLFFVTKGEQYHVAVAAASIISRAAFLEELDKESAELGFSVPSGAGSKSDQVAARILKKGGLDLLANYAKLHFANTQKAQKLL.

The region spanning 91–305 is the RNase H type-2 domain; the sequence is WSVIGSDEVG…ANTQKAQKLL (215 aa). 3 residues coordinate a divalent metal cation: Asp97, Glu98, and Asp201.

Belongs to the RNase HII family. RnhC subfamily. Requires Mn(2+) as cofactor. Mg(2+) is required as a cofactor.

The protein localises to the cytoplasm. The catalysed reaction is Endonucleolytic cleavage to 5'-phosphomonoester.. Its function is as follows. Endonuclease that specifically degrades the RNA of RNA-DNA hybrids. This chain is Ribonuclease HIII, found in Enterococcus faecalis (strain ATCC 700802 / V583).